We begin with the raw amino-acid sequence, 390 residues long: LL-diaminopimelate aminotransferase 2 (390 aa).

Residues Tyr-13 and Gly-38 each contribute to the substrate site. Pyridoxal 5'-phosphate-binding positions include Tyr-67, 102–103 (SK), Tyr-127, Asn-177, Tyr-208, and 236–238 (SLS). Residues Lys-103, Tyr-127, and Asn-177 each coordinate substrate. Position 239 is an N6-(pyridoxal phosphate)lysine (Lys-239). Residue Arg-247 participates in pyridoxal 5'-phosphate binding. Arg-365 serves as a coordination point for substrate.

It belongs to the class-I pyridoxal-phosphate-dependent aminotransferase family. LL-diaminopimelate aminotransferase subfamily. As to quaternary structure, homodimer. It depends on pyridoxal 5'-phosphate as a cofactor.

The enzyme catalyses (2S,6S)-2,6-diaminopimelate + 2-oxoglutarate = (S)-2,3,4,5-tetrahydrodipicolinate + L-glutamate + H2O + H(+). The protein operates within amino-acid biosynthesis; L-lysine biosynthesis via DAP pathway; LL-2,6-diaminopimelate from (S)-tetrahydrodipicolinate (aminotransferase route): step 1/1. In terms of biological role, involved in the synthesis of meso-diaminopimelate (m-DAP or DL-DAP), required for both lysine and peptidoglycan biosynthesis. Catalyzes the direct conversion of tetrahydrodipicolinate to LL-diaminopimelate. The sequence is that of LL-diaminopimelate aminotransferase 2 from Nostoc sp. (strain PCC 7120 / SAG 25.82 / UTEX 2576).